We begin with the raw amino-acid sequence, 394 residues long: Ribulose bisphosphate carboxylase large chain (394 aa).

K5 bears the N6,N6,N6-trimethyllysine mark. The substrate site is built by N114 and T164. The Proton acceptor role is filled by K166. K168 contacts substrate. The Mg(2+) site is built by K192, D194, and E195. Position 192 is an N6-carboxylysine (K192). H285 functions as the Proton acceptor in the catalytic mechanism. Substrate-binding residues include R286, H318, and S370.

It belongs to the RuBisCO large chain family. Type I subfamily. In terms of assembly, heterohexadecamer of 8 large chains and 8 small chains. Mg(2+) serves as cofactor.

The protein localises to the plastid. It localises to the chloroplast. The catalysed reaction is 2 (2R)-3-phosphoglycerate + 2 H(+) = D-ribulose 1,5-bisphosphate + CO2 + H2O. The enzyme catalyses D-ribulose 1,5-bisphosphate + O2 = 2-phosphoglycolate + (2R)-3-phosphoglycerate + 2 H(+). Its function is as follows. RuBisCO catalyzes two reactions: the carboxylation of D-ribulose 1,5-bisphosphate, the primary event in carbon dioxide fixation, as well as the oxidative fragmentation of the pentose substrate in the photorespiration process. Both reactions occur simultaneously and in competition at the same active site. The sequence is that of Ribulose bisphosphate carboxylase large chain (rbcL) from Barclaya longifolia (Orchid lily).